Reading from the N-terminus, the 638-residue chain is uncharacterized protein (638 aa).

This is an uncharacterized protein from Bos taurus (Bovine).